The following is a 554-amino-acid chain: Phosphoglucomutase (554 aa).

Arg-21 provides a ligand contact to alpha-D-glucose 1,6-bisphosphate. The residue at position 111 (Thr-111) is a Phosphothreonine. Ser-113 lines the alpha-D-glucose 1,6-bisphosphate pocket. Ser-113 functions as the Phosphoserine intermediate in the catalytic mechanism. Positions 113, 278, 280, and 282 each coordinate Mg(2+). Ser-113 carries the post-translational modification Phosphoserine. Asp-282, Arg-283, Thr-346, Glu-365, Ser-367, and Lys-378 together coordinate alpha-D-glucose 1,6-bisphosphate.

This sequence belongs to the phosphohexose mutase family. As to quaternary structure, monomer. Requires Mg(2+) as cofactor.

The protein localises to the cytoplasm. Its subcellular location is the nucleus. The enzyme catalyses alpha-D-glucose 1-phosphate = alpha-D-glucose 6-phosphate. The catalysed reaction is O-phospho-L-seryl-[protein] + alpha-D-glucose 1-phosphate = alpha-D-glucose 1,6-bisphosphate + L-seryl-[protein]. It carries out the reaction alpha-D-glucose 1,6-bisphosphate + L-seryl-[protein] = O-phospho-L-seryl-[protein] + alpha-D-glucose 6-phosphate. Functionally, catalyzes the reversible isomerization of alpha-D-glucose 1-phosphate to alpha-D-glucose 6-phosphate. The mechanism proceeds via the intermediate compound alpha-D-glucose 1,6-bisphosphate. Key enzyme in hexose metabolism. The reverse reaction is an essential step for biosynthesis because glucose 1-phosphate is the starting point for the synthesis of UDP-glucose, which acts as a precursor for the synthesis of oligosaccharides and trehalose. The protein is Phosphoglucomutase of Schizosaccharomyces pombe (strain 972 / ATCC 24843) (Fission yeast).